The chain runs to 250 residues: MSRVAIVTGASSGNGLAIATRFLARGDRVAALDLSAETLEETARTHWHAYADKVLRVRADVADEGDVNAAIAATMEQFGAIDVLVNNAGITGNSEAGVLHTTPVEQFDKVMAVNVRGIFLGCRAVLPHMLLQGAGVIVNIASVASLVAFPGRSAYTTSKGAVLQLTKSVAVDYAGSGIRCNAVCPGMIETPMTQWRLDQPELRDQVLARIPQKEIGTAAQVADAVMFLAGEDATYVNGAALVMDGAYTAI.

Residues 12–14 (SGN), Asp33, 60–61 (DV), and Asn87 each bind NAD(+). Arg152 contacts 2-oxopropyl-coenzyme M. Tyr155 serves as the catalytic Proton acceptor. 188–192 (IETPM) is a binding site for NAD(+). Position 195–196 (195–196 (WR)) interacts with 2-oxopropyl-coenzyme M.

This sequence belongs to the short-chain dehydrogenases/reductases (SDR) family. As to quaternary structure, homodimer in solution. Homotetramer. Component III of the aliphatic epoxide carboxylation complex together with components I, II and IV.

It catalyses the reaction (R)-2-hydroxypropyl-coenzyme M + NAD(+) = 2-oxopropyl-coenzyme M + NADH + H(+). It participates in alkene metabolism; propylene degradation. With respect to regulation, inhibited by the arginine-specific modifiers 2,3-butanedione and phenylglyoxal. 2-(2-methyl-2-hydroxypropylthio)ethanesulfonate (M-HPC), an achiral analog of both R-HPC and S-HPC, and (2S)-2-hydroxypropyl-coenzyme M (S-HPC) are competitive inhibitors. Inhibited (at 70%) by the coenzyme M analog 2-bromoethanesulfonate (BES). Its function is as follows. Involved in aliphatic epoxide carboxylation. Catalyzes the reversible oxidation of (R)-2-hydroxypropyl-coenzyme M (R-HPC) to 2-oxopropyl-coenzyme M (2-KPC). The enzyme is highly specific for the R enantiomers. In vitro can also use achiral 2-propanol and short-chain (R)- and (S)-2-alkanols. The sequence is that of 2-(R)-hydroxypropyl-CoM dehydrogenase from Xanthobacter autotrophicus (strain ATCC BAA-1158 / Py2).